The primary structure comprises 66 residues: Beta-toxin Css6 (66 aa).

The 66-residue stretch at 1 to 66 folds into the LCN-type CS-alpha/beta domain; it reads KEGYLVNSYT…VWPLPNKTCN (66 aa). Intrachain disulfides connect Cys-12-Cys-65, Cys-16-Cys-41, Cys-25-Cys-46, and Cys-29-Cys-48. At Asn-66 the chain carries Asparagine amide.

This sequence belongs to the long (4 C-C) scorpion toxin superfamily. Sodium channel inhibitor family. Beta subfamily. Expressed by the venom gland.

It is found in the secreted. In terms of biological role, beta toxins bind voltage-independently at site-4 of sodium channels (Nav) and shift the voltage of activation toward more negative potentials thereby affecting sodium channel activation and promoting spontaneous and repetitive firing. The polypeptide is Beta-toxin Css6 (Centruroides suffusus (Durango bark scorpion)).